A 94-amino-acid polypeptide reads, in one-letter code: Co-chaperonin GroES (94 aa).

Belongs to the GroES chaperonin family. Heptamer of 7 subunits arranged in a ring. Interacts with the chaperonin GroEL.

The protein localises to the cytoplasm. Its function is as follows. Together with the chaperonin GroEL, plays an essential role in assisting protein folding. The GroEL-GroES system forms a nano-cage that allows encapsulation of the non-native substrate proteins and provides a physical environment optimized to promote and accelerate protein folding. GroES binds to the apical surface of the GroEL ring, thereby capping the opening of the GroEL channel. This is Co-chaperonin GroES from Ligilactobacillus salivarius (strain UCC118) (Lactobacillus salivarius).